A 569-amino-acid polypeptide reads, in one-letter code: Protein GPR108 (569 aa).

A signal peptide spans 1-34 (MAVSERRGLSGESPTQCRWGYLSLLVLTLSGCSG). 3 N-linked (GlcNAc...) asparagine glycosylation sites follow: N59, N111, and N182. Positions 144-219 (LLPEAPTQSG…DPSGKEKDQV (76 aa)) are disordered. Residues 180 to 192 (KENQTAPQVSGDK) are compositionally biased toward polar residues. Positions 194 to 203 (TPGEHRHSSE) are enriched in basic and acidic residues. Residues N226 and N230 are each glycosylated (N-linked (GlcNAc...) asparagine). Helical transmembrane passes span 289–309 (LYLIMSACFLAADIFWVSVLC), 318–338 (IHWLMAALAFTKSVSLLFHSI), 362–382 (LLKGALLFITIALIGSGWAFV), 393–413 (IFGIVIPLQVLANVAYIVIES), 427–447 (ILFLVDLICCGAILFPVVWSI), 475–495 (VMVICYIYFTRIIAILLQVAV), and 499–519 (WQWLYQLLVESSTLAFFVLTG).

Belongs to the LU7TM family. In terms of tissue distribution, high expression in spleen, lung, stomach, large and small intestine, and thymus.

The protein localises to the golgi apparatus. Its subcellular location is the cis-Golgi network membrane. It localises to the trans-Golgi network membrane. The protein resides in the golgi apparatus membrane. In terms of biological role, may play a role in intracellular immune modulation by activating NF-kappaB response and attenuating Toll-like-receptor response. Its function is as follows. (Microbial infection) Plays an essential function in adeno-associated virus (AAV) transduction, across multiple serotypes except AAV5. May play a critical role in mediating the endosomal virus escape or in the AAV virions trafficking from endosomes to the nucleus. This chain is Protein GPR108 (Gpr108), found in Mus musculus (Mouse).